Consider the following 196-residue polypeptide: dITP/XTP pyrophosphatase (196 aa).

9–14 (TSNAGK) contributes to the substrate binding site. Residues E39 and D68 each contribute to the Mg(2+) site. D68 acts as the Proton acceptor in catalysis. Residues S69, 147 to 150 (FGYD), K170, and 175 to 176 (HR) each bind substrate.

The protein belongs to the HAM1 NTPase family. As to quaternary structure, homodimer. Mg(2+) is required as a cofactor.

It carries out the reaction XTP + H2O = XMP + diphosphate + H(+). The catalysed reaction is dITP + H2O = dIMP + diphosphate + H(+). The enzyme catalyses ITP + H2O = IMP + diphosphate + H(+). In terms of biological role, pyrophosphatase that catalyzes the hydrolysis of nucleoside triphosphates to their monophosphate derivatives, with a high preference for the non-canonical purine nucleotides XTP (xanthosine triphosphate), dITP (deoxyinosine triphosphate) and ITP. Seems to function as a house-cleaning enzyme that removes non-canonical purine nucleotides from the nucleotide pool, thus preventing their incorporation into DNA/RNA and avoiding chromosomal lesions. The sequence is that of dITP/XTP pyrophosphatase from Nostoc sp. (strain PCC 7120 / SAG 25.82 / UTEX 2576).